Reading from the N-terminus, the 295-residue chain is sn-glycerol-3-phosphate transport system permease protein UgpA (295 aa).

The Cytoplasmic segment spans residues 1–11 (MSSSRPVFRSR). Residues 12–32 (WLPYLLVAPQLIITVIFFIWP) form a helical membrane-spanning segment. Over 33-80 (AGEALWYSLQSVDPFGFSSQFVGLDNFVTLFHDSYYLDAFWTTIKFST) the chain is Periplasmic. Residues 76 to 284 (IKFSTFVTVS…FLVIVLTVVQ (209 aa)) enclose the ABC transmembrane type-1 domain. The helical transmembrane segment at 81 to 101 (FVTVSGLLVSLFFAALVEYIV) threads the bilayer. Residues 102–109 (RGSRFYQT) are Cytoplasmic-facing. A helical transmembrane segment spans residues 110–130 (LMLLPYAVAPAVAAVLWIFLF). Over 131–156 (NPGRGLITHFLAEFGYDWNHAQNSGQ) the chain is Periplasmic. A helical transmembrane segment spans residues 157–177 (AMFLVVFASVWKQISYNFLFF). Over 178-207 (YAALQSIPRSLIEAAAIDGAGPIRRFFKIA) the chain is Cytoplasmic. A helical membrane pass occupies residues 208-228 (LPLIAPVSFFLLVVNLVYAFF). Residues 229-262 (DTFPVIDAATSGGPVQATTTLIYKIYREGFTGLD) lie on the Periplasmic side of the membrane. The helical transmembrane segment at 263–283 (LASSAAQSVVLMFLVIVLTVV) threads the bilayer. The Cytoplasmic portion of the chain corresponds to 284–295 (QFRYVEGKVRYQ).

Belongs to the binding-protein-dependent transport system permease family. UgpAE subfamily. The complex is composed of two ATP-binding proteins (UgpC), two transmembrane proteins (UgpA and UgpE) and a solute-binding protein (UgpB).

It is found in the cell inner membrane. Its function is as follows. Part of the ABC transporter complex UgpBAEC involved in sn-glycerol-3-phosphate (G3P) import. Probably responsible for the translocation of the substrate across the membrane. This is sn-glycerol-3-phosphate transport system permease protein UgpA (ugpA) from Escherichia coli O6:K15:H31 (strain 536 / UPEC).